The primary structure comprises 313 residues: Maintenance of mitochondrial morphology protein 1 (313 aa).

Residues 1–12 are Lumenal-facing; sequence MIHLPQGSFTQG. Residues 13–33 form a helical membrane-spanning segment; that stretch reads LIVGQLLTLAIIYVFLRFFLF. The Cytoplasmic portion of the chain corresponds to 34-313; the sequence is CSPIPKSVAN…APQEESSNED (280 aa). Residues 42-63 are compositionally biased toward polar residues; it reads ANSPKQTGNETPDETPSTPLSN. The segment at 42 to 65 is disordered; it reads ANSPKQTGNETPDETPSTPLSNNK. The 199-residue stretch at 90 to 288 folds into the SMP-LTD domain; it reads EPESLDWFNV…SPQFQQIAIP (199 aa).

The protein belongs to the MMM1 family. In terms of assembly, homodimer. Component of the ER-mitochondria encounter structure (ERMES) or MDM complex, composed of mmm1, mdm10, mdm12 and mdm34. A mmm1 homodimer associates with one molecule of mdm12 on each side in a pairwise head-to-tail manner, and the SMP-LTD domains of mmm1 and mdm12 generate a continuous hydrophobic tunnel for phospholipid trafficking.

Its subcellular location is the endoplasmic reticulum membrane. Functionally, component of the ERMES/MDM complex, which serves as a molecular tether to connect the endoplasmic reticulum (ER) and mitochondria. Components of this complex are involved in the control of mitochondrial shape and protein biogenesis, and function in nonvesicular lipid trafficking between the ER and mitochondria. The mdm12-mmm1 subcomplex functions in the major beta-barrel assembly pathway that is responsible for biogenesis of all outer membrane beta-barrel proteins, and acts in a late step after the SAM complex. The mdm10-mdm12-mmm1 subcomplex further acts in the TOM40-specific pathway after the action of the mdm12-mmm1 complex. Essential for establishing and maintaining the structure of mitochondria and maintenance of mtDNA nucleoids. In Schizosaccharomyces pombe (strain 972 / ATCC 24843) (Fission yeast), this protein is Maintenance of mitochondrial morphology protein 1.